Consider the following 410-residue polypeptide: MDEGIPHLQERQLLEHRDFIGLDYSSLYMCKPKRSLKRDDTKDTYKLPHRLIEKKRRDRINECIAQLKDLLPEHLKLTTLGHLEKAVVLELTLKHLKALTALTEQQHQKIIALQNGERSLKSPVQADLDAFHSGFQTCAKEVLQYLARFESWTPREPRCAQLVSHLHAVATQLLTPQVPSGRGSGRAPCSAGAAAASGPERVARCVPVIQRTQPGTEPEHDTDTDSGYGGEAEQGRAAVKQEPPGDSSPAPKRPKLEARGALLGPEPALLGSLVALGGGAPFAQPAAAPFCLPFYLLSPSAAAYVQPWLDKSGLDKYLYPAAAAPFPLLYPGIPAAAAAAAAAAFPCLSSVLSPPPEKAGATAGAPFLAHEVAPPGPLRPQHAHSRTHLPRAVNPESSQEDATQPAKDAP.

A Glycyl lysine isopeptide (Lys-Gly) (interchain with G-Cter in SUMO2) cross-link involves residue K31. In terms of domain architecture, bHLH spans 44–99; that stretch reads TYKLPHRLIEKKRRDRINECIAQLKDLLPEHLKLTTLGHLEKAVVLELTLKHLKAL. Residue K121 forms a Glycyl lysine isopeptide (Lys-Gly) (interchain with G-Cter in SUMO2) linkage. Residues 131–166 form the Orange domain; it reads FHSGFQTCAKEVLQYLARFESWTPREPRCAQLVSHL. Disordered stretches follow at residues 209 to 255 and 360 to 410; these read IQRT…KRPK and GATA…KDAP. A Glycyl lysine isopeptide (Lys-Gly) (interchain with G-Cter in SUMO2) cross-link involves residue K240.

In terms of assembly, homodimer. Heterodimer with BHLHE40/DEC1. Interacts with CIART. Interacts with BMAL1. Interacts with RXRA. Interacts with NR0B2 and HNF1A. As to expression, expressed in skeletal muscle, brain and lung.

Its subcellular location is the nucleus. Its function is as follows. Transcriptional repressor involved in the regulation of the circadian rhythm by negatively regulating the activity of the clock genes and clock-controlled genes. Acts as the negative limb of a novel autoregulatory feedback loop (DEC loop) which differs from the one formed by the PER and CRY transcriptional repressors (PER/CRY loop). Both these loops are interlocked as it represses the expression of PER1 and in turn is repressed by PER1/2 and CRY1/2. Represses the activity of the circadian transcriptional activator: CLOCK-BMAL1 heterodimer by competing for the binding to E-box elements (5'-CACGTG-3') found within the promoters of its target genes. Negatively regulates its own expression and the expression of DBP and BHLHE41/DEC2. Acts as a corepressor of RXR and the RXR-LXR heterodimers and represses the ligand-induced RXRA/B/G, NR1H3/LXRA, NR1H4 and VDR transactivation activity. Inhibits HNF1A-mediated transactivation of CYP1A2, CYP2E1 and CYP3A11. The chain is Class E basic helix-loop-helix protein 41 (Bhlhe41) from Mus musculus (Mouse).